The following is a 127-amino-acid chain: Fluoride-specific ion channel FluC (127 aa).

4 helical membrane passes run 4–24 (LLLAVFIGGGTGSVARWLLSM), 35–55 (LGTLTANLIGAFIIGMGFAWF), 71–91 (TGFCGGLTTFSTFSAEVVFLL), and 103–123 (VFVNLLGSFAMTALAFWLFSA). Na(+) contacts are provided by Gly-75 and Thr-78.

The protein belongs to the fluoride channel Fluc/FEX (TC 1.A.43) family.

Its subcellular location is the cell inner membrane. It carries out the reaction fluoride(in) = fluoride(out). Na(+) is not transported, but it plays an essential structural role and its presence is essential for fluoride channel function. In terms of biological role, fluoride-specific ion channel. Important for reducing fluoride concentration in the cell, thus reducing its toxicity. This chain is Fluoride-specific ion channel FluC, found in Escherichia coli (strain ATCC 8739 / DSM 1576 / NBRC 3972 / NCIMB 8545 / WDCM 00012 / Crooks).